A 432-amino-acid chain; its full sequence is MSKIVKIIGREIIDSRGNPTVEAEVHLEGGFVGMAAAPSGASTGSREALELRDGDKSRFLGKGVTKAVAAVNGPIAQALIGKDAKDQAGIDKIMIDLDGTENKSKFGANAILAVSLANAKAAAADKGMPLYEHIAELNGTPGKYSMPVPMMNIINGGEHADNNVDIQEFMIQPVGAKTVKEAIRMGSEVFHHLAKVLKAKGMNTAVGDEGGYAPNLGSNAEALAVIAEAVKAAGYELGKDITLAMDCAASEFYKDGKYVLAGEGNKAFTSEEFTHFLEELTKQYPIVSIEDGLDESDWDGFAYQTKVLGDKIQLVGDDLFVTNTKILKEGIEKGIANSILIKFNQIGSLTETLAAIKMAKDAGYTAVISHRSGETEDATIADLAVGTAAGQIKTGSMSRSDRVAKYNQLIRIEEALGEKAPYNGRKEIKGQA.

Residue Q167 coordinates (2R)-2-phosphoglycerate. Catalysis depends on E209, which acts as the Proton donor. Residues D246, E290, and D317 each contribute to the Mg(2+) site. Positions 342, 371, 372, and 393 each coordinate (2R)-2-phosphoglycerate. K342 acts as the Proton acceptor in catalysis.

The protein belongs to the enolase family. As to quaternary structure, component of the RNA degradosome, a multiprotein complex involved in RNA processing and mRNA degradation. Mg(2+) is required as a cofactor.

Its subcellular location is the cytoplasm. The protein resides in the secreted. The protein localises to the cell surface. It carries out the reaction (2R)-2-phosphoglycerate = phosphoenolpyruvate + H2O. It participates in carbohydrate degradation; glycolysis; pyruvate from D-glyceraldehyde 3-phosphate: step 4/5. Functionally, catalyzes the reversible conversion of 2-phosphoglycerate (2-PG) into phosphoenolpyruvate (PEP). It is essential for the degradation of carbohydrates via glycolysis. The chain is Enolase from Shigella sonnei (strain Ss046).